Reading from the N-terminus, the 555-residue chain is CTP synthase (555 aa).

Positions 1–277 are amidoligase domain; it reads MPKEPETEYD…DQHVMERLNV (277 aa). Serine 26 contributes to the CTP binding site. Serine 26 is a binding site for UTP. Residue 27 to 32 coordinates ATP; sequence GLGKGI. Tyrosine 67 provides a ligand contact to L-glutamine. ATP is bound at residue aspartate 84. The Mg(2+) site is built by aspartate 84 and glutamate 152. Residues 159–161, 198–203, and lysine 234 each bind CTP; these read DIE and KTKPTQ. Residues 198–203 and lysine 234 each bind UTP; that span reads KTKPTQ. Positions 307 to 542 constitute a Glutamine amidotransferase type-1 domain; the sequence is LVGKYDLEDA…LKSVDSTLDA (236 aa). Glycine 364 provides a ligand contact to L-glutamine. The Nucleophile; for glutamine hydrolysis role is filled by cysteine 391. L-glutamine is bound by residues 392–395, glutamate 415, and arginine 472; that span reads LGFQ. Residues histidine 515 and glutamate 517 contribute to the active site.

This sequence belongs to the CTP synthase family. In terms of assembly, homotetramer.

The catalysed reaction is UTP + L-glutamine + ATP + H2O = CTP + L-glutamate + ADP + phosphate + 2 H(+). It catalyses the reaction L-glutamine + H2O = L-glutamate + NH4(+). The enzyme catalyses UTP + NH4(+) + ATP = CTP + ADP + phosphate + 2 H(+). It functions in the pathway pyrimidine metabolism; CTP biosynthesis via de novo pathway; CTP from UDP: step 2/2. Allosterically activated by GTP, when glutamine is the substrate; GTP has no effect on the reaction when ammonia is the substrate. The allosteric effector GTP functions by stabilizing the protein conformation that binds the tetrahedral intermediate(s) formed during glutamine hydrolysis. Inhibited by the product CTP, via allosteric rather than competitive inhibition. Catalyzes the ATP-dependent amination of UTP to CTP with either L-glutamine or ammonia as the source of nitrogen. Regulates intracellular CTP levels through interactions with the four ribonucleotide triphosphates. This chain is CTP synthase, found in Haloquadratum walsbyi (strain DSM 16790 / HBSQ001).